The sequence spans 292 residues: Nucleotide-binding protein AZOSEA20610 (292 aa).

8 to 15 lines the ATP pocket; that stretch reads GLSGSGKS. 57-60 is a binding site for GTP; it reads DVRS.

Belongs to the RapZ-like family.

In terms of biological role, displays ATPase and GTPase activities. This Aromatoleum aromaticum (strain DSM 19018 / LMG 30748 / EbN1) (Azoarcus sp. (strain EbN1)) protein is Nucleotide-binding protein AZOSEA20610.